The chain runs to 525 residues: Probable feruloyl esterase B-1 (525 aa).

A signal peptide spans 1-20 (MMRWFLLIGLASAAATDSSA). 6 disulfide bridges follow: cysteine 26–cysteine 75, cysteine 61–cysteine 114, cysteine 187–cysteine 442, cysteine 256–cysteine 273, cysteine 282–cysteine 292, and cysteine 502–cysteine 524. Residues asparagine 51, asparagine 80, and asparagine 98 are each glycosylated (N-linked (GlcNAc...) asparagine). The Acyl-ester intermediate role is filled by serine 188. Residues aspartate 257, aspartate 260, alanine 262, and aspartate 264 each contribute to the Ca(2+) site. Residues asparagine 283, asparagine 288, and asparagine 351 are each glycosylated (N-linked (GlcNAc...) asparagine). Residues aspartate 401 and histidine 441 each act as charge relay system in the active site.

This sequence belongs to the tannase family.

The protein resides in the secreted. It catalyses the reaction feruloyl-polysaccharide + H2O = ferulate + polysaccharide.. Involved in degradation of plant cell walls. Hydrolyzes the feruloyl-arabinose ester bond in arabinoxylans as well as the feruloyl-galactose and feruloyl-arabinose ester bonds in pectin. This chain is Probable feruloyl esterase B-1 (faeB-1), found in Neosartorya fischeri (strain ATCC 1020 / DSM 3700 / CBS 544.65 / FGSC A1164 / JCM 1740 / NRRL 181 / WB 181) (Aspergillus fischerianus).